Consider the following 276-residue polypeptide: Diaminopimelate epimerase (276 aa).

3 residues coordinate substrate: Asn13, Gln46, and Asn66. Cys75 (proton donor) is an active-site residue. Substrate is bound by residues 76 to 77, Asn159, Asn192, and 210 to 211; these read GN and ER. The active-site Proton acceptor is the Cys219. Residue 220 to 221 participates in substrate binding; that stretch reads GT.

The protein belongs to the diaminopimelate epimerase family. Homodimer.

It is found in the cytoplasm. The enzyme catalyses (2S,6S)-2,6-diaminopimelate = meso-2,6-diaminopimelate. It functions in the pathway amino-acid biosynthesis; L-lysine biosynthesis via DAP pathway; DL-2,6-diaminopimelate from LL-2,6-diaminopimelate: step 1/1. Its function is as follows. Catalyzes the stereoinversion of LL-2,6-diaminopimelate (L,L-DAP) to meso-diaminopimelate (meso-DAP), a precursor of L-lysine and an essential component of the bacterial peptidoglycan. The protein is Diaminopimelate epimerase of Aeromonas salmonicida (strain A449).